The following is a 511-amino-acid chain: Aminotransferase FGSG_17085 (511 aa).

165-166 contacts pyridoxal 5'-phosphate; sequence GA. A substrate-binding site is contributed by Tyr-200. Residue Asp-310 coordinates pyridoxal 5'-phosphate. Position 339 is an N6-(pyridoxal phosphate)lysine (Lys-339). Gly-371 contacts substrate. Position 372 to 373 (372 to 373) interacts with pyridoxal 5'-phosphate; that stretch reads HT.

It belongs to the class-III pyridoxal-phosphate-dependent aminotransferase family. It depends on pyridoxal 5'-phosphate as a cofactor.

It participates in secondary metabolite biosynthesis. Its function is as follows. Aminotransferase; part of the gene cluster that mediates the biosynthesis of the lipopeptide fusaristatin A. Fusaristatin A consists of a polyketide chain linked to three amino acid residues glutamine (Gln), dehydroalanine (dehydro-Ala), and beta-aminoisobutyric acid. The biosynthesis starts with formation of a linear polyketide chain by the highly reducing polyketide synthase PKS6. The gene cluster does not contain an acyl-CoA ligase or an acyl-transferase, and it is therefore predicted that the polyketide is transferred directly to the nonribosomal peptide synthetase NRPS7. Modules 1-3 from NRPS7 incorporate dehydro-Ala, Gln, and beta-aminoisobutyric acid in the compound, which is released by cyclization. The beta-aminoisobutyric acid units are most likely not freely available to the NRPS, but can be synthesized from thymine, which requires a dehydrogenase, a monooxygenase, and an aminotransferase. The fusaristatin A cluster contains a cytochrome P450 monooxygenase (FGSG_08207) and an aminotransferase (FGSG_17085), which theoretically can perform two of the enzymatic steps. The enzymes may however also be involved in biosynthesis of dehydroalanine or modification of the polyketide. The dehydro-Ala residue can be a result of cyclization, where serine is dehydrated. The last gene of the cluster encodes a protein with an A/B barrel domain found in variable enzymes, which hampers functional prediction. The polypeptide is Aminotransferase FGSG_17085 (Gibberella zeae (strain ATCC MYA-4620 / CBS 123657 / FGSC 9075 / NRRL 31084 / PH-1) (Wheat head blight fungus)).